The sequence spans 58 residues: Small ribosomal subunit protein bS21 (58 aa).

A disordered region spans residues Ser-25–Phe-58. Basic and acidic residues predominate over residues Glu-32–Ser-43. Residues Val-44 to Phe-58 show a composition bias toward basic residues.

The protein belongs to the bacterial ribosomal protein bS21 family.

This Oceanobacillus iheyensis (strain DSM 14371 / CIP 107618 / JCM 11309 / KCTC 3954 / HTE831) protein is Small ribosomal subunit protein bS21.